The following is a 212-amino-acid chain: Ribonuclease P protein component 3 (212 aa).

This sequence belongs to the eukaryotic/archaeal RNase P protein component 3 family. Consists of a catalytic RNA component and at least 4-5 protein subunits.

Its subcellular location is the cytoplasm. The enzyme catalyses Endonucleolytic cleavage of RNA, removing 5'-extranucleotides from tRNA precursor.. Part of ribonuclease P, a protein complex that generates mature tRNA molecules by cleaving their 5'-ends. The polypeptide is Ribonuclease P protein component 3 (Pyrococcus abyssi (strain GE5 / Orsay)).